Consider the following 37-residue polypeptide: MVEPLLSGIVLGLIVVTLSGLFYAAYKQYKRPNELGG.

A helical membrane pass occupies residues 5 to 25; it reads LLSGIVLGLIVVTLSGLFYAA.

Belongs to the PetG family. In terms of assembly, the 4 large subunits of the cytochrome b6-f complex are cytochrome b6, subunit IV (17 kDa polypeptide, PetD), cytochrome f and the Rieske protein, while the 4 small subunits are PetG, PetL, PetM and PetN. The complex functions as a dimer.

It is found in the cellular thylakoid membrane. Functionally, component of the cytochrome b6-f complex, which mediates electron transfer between photosystem II (PSII) and photosystem I (PSI), cyclic electron flow around PSI, and state transitions. PetG is required for either the stability or assembly of the cytochrome b6-f complex. The protein is Cytochrome b6-f complex subunit 5 of Trichormus variabilis (strain ATCC 29413 / PCC 7937) (Anabaena variabilis).